Here is a 338-residue protein sequence, read N- to C-terminus: Large ribosomal subunit protein uL10 (338 aa).

Residues 295–338 (EVPTIQPTTPPEKKEEEEKKEEEEEEAETVSEEELAEGLGALFG) form a disordered region. A compositionally biased stretch (acidic residues) spans 312–330 (EKKEEEEEEAETVSEEELA).

Belongs to the universal ribosomal protein uL10 family. As to quaternary structure, part of the 50S ribosomal subunit. Forms part of the ribosomal stalk which helps the ribosome interact with GTP-bound translation factors. Forms a heptameric L10(L12)2(L12)2(L12)2 complex, where L10 forms an elongated spine to which the L12 dimers bind in a sequential fashion.

In terms of biological role, forms part of the ribosomal stalk, playing a central role in the interaction of the ribosome with GTP-bound translation factors. This chain is Large ribosomal subunit protein uL10, found in Staphylothermus marinus (strain ATCC 43588 / DSM 3639 / JCM 9404 / F1).